Reading from the N-terminus, the 447-residue chain is N-succinylarginine dihydrolase (447 aa).

Substrate is bound by residues 19–28 (AGLSFGNEAS), Asn110, and 137–138 (HR). Glu174 is a catalytic residue. Arg212 provides a ligand contact to substrate. His248 is a catalytic residue. 2 residues coordinate substrate: Asp250 and Asn359. The Nucleophile role is filled by Cys365.

Belongs to the succinylarginine dihydrolase family. Homodimer.

The enzyme catalyses N(2)-succinyl-L-arginine + 2 H2O + 2 H(+) = N(2)-succinyl-L-ornithine + 2 NH4(+) + CO2. Its pathway is amino-acid degradation; L-arginine degradation via AST pathway; L-glutamate and succinate from L-arginine: step 2/5. Functionally, catalyzes the hydrolysis of N(2)-succinylarginine into N(2)-succinylornithine, ammonia and CO(2). The chain is N-succinylarginine dihydrolase from Salmonella typhimurium (strain LT2 / SGSC1412 / ATCC 700720).